The primary structure comprises 564 residues: Hexose transporter HXT17 (564 aa).

Residues 1–12 (MQSSTESDRDIQ) show a composition bias toward basic and acidic residues. A disordered region spans residues 1 to 22 (MQSSTESDRDIQDGPDADIHVA). Residues 1–52 (MQSSTESDRDIQDGPDADIHVAPPVEKEWSDGFDDNEVINGDNVEPPKRGLI) lie on the Cytoplasmic side of the membrane. A helical transmembrane segment spans residues 53 to 73 (GYLVIYLLCYPISFGGFLPGW). The Extracellular segment spans residues 74–109 (DSGITAGFINMDNFKMNFGSYKHSTGEYYLSNVRMG). Residues 110–130 (LLVAMFSIGCAIGGLIFARLA) traverse the membrane as a helical segment. Topologically, residues 131–136 (DTLGRR) are cytoplasmic. A helical membrane pass occupies residues 137-157 (LAIVIVVLVYMVGAIIQISSN). Over 158–167 (HKWYQYFVGK) the chain is Extracellular. Residues 168 to 188 (IIYGLGAGGCSVLCPMLLSEI) form a helical membrane-spanning segment. Residues 189 to 194 (APTDLR) lie on the Cytoplasmic side of the membrane. A helical transmembrane segment spans residues 195–215 (GGLVSLYQLNMTFGIFLGYCS). At 216 to 229 (VYGTRKYDNTAQWR) the chain is on the extracellular side. The helical transmembrane segment at 230–250 (VPLGLCFLWTLIIIIGMLLVP) threads the bilayer. Residues 251-333 (ESPRYLIECE…VQTFLQLTGE (83 aa)) are Cytoplasmic-facing. A helical membrane pass occupies residues 334–350 (NYFFFYGTTIFKSVGLT). At 351-356 (DGFETS) the chain is on the extracellular side. Residues 357-374 (IVLGTVNFFSTIIAVMVV) form a helical membrane-spanning segment. Residues 375–381 (DKIGRRK) are Cytoplasmic-facing. The chain crosses the membrane as a helical span at residues 382–402 (CLLFGAAGMMACMVIFASIGV). The Extracellular segment spans residues 403–424 (KCLYPHGQDGPSSKGAGNAMIV). Residues 425-445 (FTCFYIFCFATTWAPVAYIVV) form a helical membrane-spanning segment. The Cytoplasmic segment spans residues 446–462 (AESFPSKVKSRAMSIST). The chain crosses the membrane as a helical span at residues 463-483 (ACNWLWQFLIGFFTPFITGSI). Residue His484 is a topological domain, extracellular. A helical membrane pass occupies residues 485 to 505 (FYYGYVFVGCLVAMFLYVFFF). At 506-564 (LPETIGLSLEEIQLLYEEGIKPWKSASWVPPSRRGIPSEESKTEKKDWKKFLKFSKGSD) the chain is on the cytoplasmic side.

This sequence belongs to the major facilitator superfamily. Sugar transporter (TC 2.A.1.1) family.

The protein resides in the membrane. In terms of biological role, probable glucose transporter. The protein is Hexose transporter HXT17 (HXT17) of Saccharomyces cerevisiae (strain ATCC 204508 / S288c) (Baker's yeast).